A 366-amino-acid polypeptide reads, in one-letter code: MVVLGSTGSIGVNTLEIARRYDIEIEGLVAGNNYEVLNAQIKEFKPKYVVVKDLKTAEKIDFPNVKYGEEAVLDMIEKSKSDLIVNALVGDAGLRPTLKAQECGKKIALANKESLVNAGKFIDTSKITPIDSEHFGLWYLLIEKCRVKSEKCNVKKLYITASGGALRDWSLEDIKKATLKDVLKHPNWSMGVKITIDSATMVNKLFELLEAKWLFDTDKIDAFIETKSIIHALVEWQDGSTTAHISKTDMKLPIAFAVLDEVNDEILSPVNLLEVGGLEFRKIEVEKYPVWEIKDLLLIKPDLGVVVNTANEFAIEKFLEERISFIDISGIILKAVQKFENVNINGIDDVFEIKNEVRKWCESNFV.

Residues Thr7, Gly8, Ser9, Ile10, Gly31, Asn33, and Asn111 each contribute to the NADPH site. Lys112 contacts 1-deoxy-D-xylulose 5-phosphate. Position 113 (Glu113) interacts with NADPH. Asp131 is a binding site for Mn(2+). 1-deoxy-D-xylulose 5-phosphate-binding residues include Ser132, Glu133, Ser162, and His185. Glu133 lines the Mn(2+) pocket. Gly191 is a binding site for NADPH. 1-deoxy-D-xylulose 5-phosphate is bound by residues Ser198, Asn203, Lys204, and Glu207. Glu207 is a Mn(2+) binding site.

Belongs to the DXR family. Mg(2+) serves as cofactor. Mn(2+) is required as a cofactor.

It catalyses the reaction 2-C-methyl-D-erythritol 4-phosphate + NADP(+) = 1-deoxy-D-xylulose 5-phosphate + NADPH + H(+). It functions in the pathway isoprenoid biosynthesis; isopentenyl diphosphate biosynthesis via DXP pathway; isopentenyl diphosphate from 1-deoxy-D-xylulose 5-phosphate: step 1/6. Its function is as follows. Catalyzes the NADPH-dependent rearrangement and reduction of 1-deoxy-D-xylulose-5-phosphate (DXP) to 2-C-methyl-D-erythritol 4-phosphate (MEP). The polypeptide is 1-deoxy-D-xylulose 5-phosphate reductoisomerase (Nautilia profundicola (strain ATCC BAA-1463 / DSM 18972 / AmH)).